A 154-amino-acid polypeptide reads, in one-letter code: Myoglobin (154 aa).

The Globin domain maps to 2 to 148; the sequence is GLSEGEWQLV…FRKDIAAKYK (147 aa). S4 carries the phosphoserine modification. Position 65 (H65) interacts with nitrite. H65 lines the O2 pocket. At T68 the chain carries Phosphothreonine. H94 serves as a coordination point for heme b.

Monomer.

The protein resides in the cytoplasm. It localises to the sarcoplasm. The catalysed reaction is Fe(III)-heme b-[protein] + nitric oxide + H2O = Fe(II)-heme b-[protein] + nitrite + 2 H(+). The enzyme catalyses H2O2 + AH2 = A + 2 H2O. Functionally, monomeric heme protein which primary function is to store oxygen and facilitate its diffusion within muscle tissues. Reversibly binds oxygen through a pentacoordinated heme iron and enables its timely and efficient release as needed during periods of heightened demand. Depending on the oxidative conditions of tissues and cells, and in addition to its ability to bind oxygen, it also has a nitrite reductase activity whereby it regulates the production of bioactive nitric oxide. Under stress conditions, like hypoxia and anoxia, it also protects cells against reactive oxygen species thanks to its pseudoperoxidase activity. The protein is Myoglobin (MB) of Delphinapterus leucas (Beluga whale).